Consider the following 377-residue polypeptide: TraB domain-containing protein (377 aa).

M1 carries the N-acetylmethionine modification. The interval 1–34 is disordered; sequence MEEPEEQPPHEADTEPVVTSGASEAVPRVLPGDP. T65 bears the Phosphothreonine mark.

In Bos taurus (Bovine), this protein is TraB domain-containing protein (TRABD).